Consider the following 181-residue polypeptide: Transcriptional repressor NrdR (181 aa).

A zinc finger spans residues 3–34 (CPFCRHPDSRVVDSREAEEGSAIRRRRSCLSC). The 91-residue stretch at 46–136 (LQVRKRSGAA…VYLAFESLTD (91 aa)) folds into the ATP-cone domain. Residues 148-181 (AAGPPTTRDGPARPVPRGAVDVSPVIGTQQVHSR) form a disordered region.

This sequence belongs to the NrdR family. The cofactor is Zn(2+).

Functionally, negatively regulates transcription of bacterial ribonucleotide reductase nrd genes and operons by binding to NrdR-boxes. The polypeptide is Transcriptional repressor NrdR (Frankia casuarinae (strain DSM 45818 / CECT 9043 / HFP020203 / CcI3)).